The sequence spans 194 residues: Large ribosomal subunit protein bL9c (194 aa).

Residues 1 to 39 (MASSTLSSLSSTPLQHSFAANLKTCSQFPNKSSGFMVFA) constitute a chloroplast transit peptide.

The protein belongs to the bacterial ribosomal protein bL9 family. In terms of assembly, part of the 50S ribosomal subunit.

The protein localises to the plastid. The protein resides in the chloroplast. In terms of biological role, binds to the 23S rRNA. In Pisum sativum (Garden pea), this protein is Large ribosomal subunit protein bL9c (RPL9).